The following is a 153-amino-acid chain: Small ribosomal subunit protein uS17 (153 aa).

It belongs to the universal ribosomal protein uS17 family.

The chain is Small ribosomal subunit protein uS17 (RpS11) from Anopheles gambiae (African malaria mosquito).